A 283-amino-acid polypeptide reads, in one-letter code: Phosphatidylglycerol--prolipoprotein diacylglyceryl transferase (283 aa).

The next 3 helical transmembrane spans lie at 17–37 (LAVR…TFLG), 56–76 (FLTW…VLFY), and 88–108 (IFKV…VVIA). Arg139 lines the a 1,2-diacyl-sn-glycero-3-phospho-(1'-sn-glycerol) pocket. 2 helical membrane passes run 222–242 (GQVA…AEFA) and 255–275 (GLSM…VGFV).

This sequence belongs to the Lgt family.

It is found in the cell inner membrane. It carries out the reaction L-cysteinyl-[prolipoprotein] + a 1,2-diacyl-sn-glycero-3-phospho-(1'-sn-glycerol) = an S-1,2-diacyl-sn-glyceryl-L-cysteinyl-[prolipoprotein] + sn-glycerol 1-phosphate + H(+). The protein operates within protein modification; lipoprotein biosynthesis (diacylglyceryl transfer). Its function is as follows. Catalyzes the transfer of the diacylglyceryl group from phosphatidylglycerol to the sulfhydryl group of the N-terminal cysteine of a prolipoprotein, the first step in the formation of mature lipoproteins. This Neisseria meningitidis serogroup B (strain ATCC BAA-335 / MC58) protein is Phosphatidylglycerol--prolipoprotein diacylglyceryl transferase.